Here is a 377-residue protein sequence, read N- to C-terminus: UDP-N,N'-diacetylbacillosamine 2-epimerase (hydrolyzing) (377 aa).

Belongs to the UDP-N-acetylglucosamine 2-epimerase family.

It carries out the reaction UDP-N,N'-diacetylbacillosamine + H2O = 2,4-diacetamido-2,4,6-trideoxy-alpha-D-mannopyranose + UDP + H(+). Its function is as follows. Involved in biosynthesis of legionaminic acid (5,7-diamino-3,5,7,9-tetradeoxy-D-glycero-D-galacto-non-2-ulosonic acid)(Leg), a sialic acid-like derivative that is incorporated into virulence-associated cell surface glycoconjugates such as lipopolysaccharide (LPS) which could be a key determinant in the ability of L.pneumophila to inhibit the fusion of phagosomes with lysosomes. LPS contains a majority alpha2,4-linked homomer of legionaminic acid. Catalyzes the conversion of UDP-N,N'-diacetylbacillosamine (Bac2Ac4Ac) into 2,4-diacetamido-2,4,6-trideoxymannose and UDP. The protein is UDP-N,N'-diacetylbacillosamine 2-epimerase (hydrolyzing) of Legionella pneumophila subsp. pneumophila (strain Philadelphia 1 / ATCC 33152 / DSM 7513).